A 202-amino-acid chain; its full sequence is IMP cyclohydrolase (202 aa).

Residues 29 to 52 (VQRDGTVTVEPTPDAPETDNPYIS) form a disordered region.

Belongs to the archaeal IMP cyclohydrolase family.

It carries out the reaction IMP + H2O = 5-formamido-1-(5-phospho-D-ribosyl)imidazole-4-carboxamide. It functions in the pathway purine metabolism; IMP biosynthesis via de novo pathway; IMP from 5-formamido-1-(5-phospho-D-ribosyl)imidazole-4-carboxamide: step 1/1. Catalyzes the cyclization of 5-formylamidoimidazole-4-carboxamide ribonucleotide to IMP. This is IMP cyclohydrolase from Haloarcula marismortui (strain ATCC 43049 / DSM 3752 / JCM 8966 / VKM B-1809) (Halobacterium marismortui).